We begin with the raw amino-acid sequence, 70 residues long: MQQGIHPDYHPVEVTCSCGNTFVTRTAGKEDHMFVDVCSQCHPFYTGKQKILDTGGRVARFEKRYGKKSK.

Zn(2+) is bound by residues C16, C18, C38, and C41.

It belongs to the bacterial ribosomal protein bL31 family. Type A subfamily. Part of the 50S ribosomal subunit. It depends on Zn(2+) as a cofactor.

In terms of biological role, binds the 23S rRNA. The polypeptide is Large ribosomal subunit protein bL31 (Bifidobacterium longum (strain DJO10A)).